The sequence spans 494 residues: Aspartyl/glutamyl-tRNA(Asn/Gln) amidotransferase subunit B (494 aa).

It belongs to the GatB/GatE family. GatB subfamily. As to quaternary structure, heterotrimer of A, B and C subunits.

The catalysed reaction is L-glutamyl-tRNA(Gln) + L-glutamine + ATP + H2O = L-glutaminyl-tRNA(Gln) + L-glutamate + ADP + phosphate + H(+). The enzyme catalyses L-aspartyl-tRNA(Asn) + L-glutamine + ATP + H2O = L-asparaginyl-tRNA(Asn) + L-glutamate + ADP + phosphate + 2 H(+). In terms of biological role, allows the formation of correctly charged Asn-tRNA(Asn) or Gln-tRNA(Gln) through the transamidation of misacylated Asp-tRNA(Asn) or Glu-tRNA(Gln) in organisms which lack either or both of asparaginyl-tRNA or glutaminyl-tRNA synthetases. The reaction takes place in the presence of glutamine and ATP through an activated phospho-Asp-tRNA(Asn) or phospho-Glu-tRNA(Gln). This Protochlamydia amoebophila (strain UWE25) protein is Aspartyl/glutamyl-tRNA(Asn/Gln) amidotransferase subunit B.